We begin with the raw amino-acid sequence, 406 residues long: NIPA-like protein 3 (406 aa).

4 helical membrane passes run Asn33–Leu53, Trp76–Phe96, Leu101–Ile121, and Ile135–Ala155. Asn166 carries an N-linked (GlcNAc...) asparagine glycan. A run of 5 helical transmembrane segments spans residues Leu171–Leu191, Ile202–Ala222, Pro240–Leu260, Leu271–Phe291, and Val300–Ile320. At Ser372 the chain carries Phosphoserine.

It belongs to the NIPA family.

The protein resides in the membrane. This chain is NIPA-like protein 3 (NIPAL3), found in Pongo abelii (Sumatran orangutan).